Consider the following 352-residue polypeptide: Probable tyrosine-protein kinase DDB_G0290471 (352 aa).

The 283-residue stretch at 51–333 folds into the Protein kinase domain; it reads IEYVCRLGSG…ISLNQIRSFY (283 aa). Residues 57–65 and Lys-78 each bind ATP; that span reads LGSGSLCRV. Asp-175 acts as the Proton acceptor in catalysis.

The protein belongs to the protein kinase superfamily. TKL Tyr protein kinase family.

The catalysed reaction is L-tyrosyl-[protein] + ATP = O-phospho-L-tyrosyl-[protein] + ADP + H(+). The sequence is that of Probable tyrosine-protein kinase DDB_G0290471 from Dictyostelium discoideum (Social amoeba).